The chain runs to 787 residues: Phenylalanine--tRNA ligase beta subunit (787 aa).

Residues 39–149 (APAFAGVVIA…EDAPVGTNIR (111 aa)) enclose the tRNA-binding domain. The B5 domain occupies 400–475 (PEVKQVGLRL…RVYGYENIPD (76 aa)). 4 residues coordinate Mg(2+): D453, D459, E462, and E463. An FDX-ACB domain is found at 694 to 786 (SKFQPVRRDL…AATAAGARLR (93 aa)).

The protein belongs to the phenylalanyl-tRNA synthetase beta subunit family. Type 1 subfamily. As to quaternary structure, tetramer of two alpha and two beta subunits. The cofactor is Mg(2+).

It localises to the cytoplasm. It catalyses the reaction tRNA(Phe) + L-phenylalanine + ATP = L-phenylalanyl-tRNA(Phe) + AMP + diphosphate + H(+). The polypeptide is Phenylalanine--tRNA ligase beta subunit (pheT) (Neisseria meningitidis serogroup A / serotype 4A (strain DSM 15465 / Z2491)).